The chain runs to 426 residues: Serine--tRNA ligase (426 aa).

229-231 (TAE) provides a ligand contact to L-serine. Residues 260–262 (RTE) and V276 each bind ATP. E283 contributes to the L-serine binding site. 350–353 (EVTS) provides a ligand contact to ATP. An L-serine-binding site is contributed by T386.

Belongs to the class-II aminoacyl-tRNA synthetase family. Type-1 seryl-tRNA synthetase subfamily. In terms of assembly, homodimer. The tRNA molecule binds across the dimer.

The protein localises to the cytoplasm. It carries out the reaction tRNA(Ser) + L-serine + ATP = L-seryl-tRNA(Ser) + AMP + diphosphate + H(+). The enzyme catalyses tRNA(Sec) + L-serine + ATP = L-seryl-tRNA(Sec) + AMP + diphosphate + H(+). Its pathway is aminoacyl-tRNA biosynthesis; selenocysteinyl-tRNA(Sec) biosynthesis; L-seryl-tRNA(Sec) from L-serine and tRNA(Sec): step 1/1. Its function is as follows. Catalyzes the attachment of serine to tRNA(Ser). Is also able to aminoacylate tRNA(Sec) with serine, to form the misacylated tRNA L-seryl-tRNA(Sec), which will be further converted into selenocysteinyl-tRNA(Sec). The chain is Serine--tRNA ligase from Rhodopirellula baltica (strain DSM 10527 / NCIMB 13988 / SH1).